Consider the following 210-residue polypeptide: Probable GTP-binding protein EngB (210 aa).

Positions 25-199 constitute an EngB-type G domain; it reads TGIEVAFAGR…RQKLDTWFSE (175 aa). GTP is bound by residues 33 to 40, 60 to 64, 78 to 81, 145 to 148, and 178 to 180; these read GRSNAGKS, GRTQL, DLPG, TKAD, and FSS. Mg(2+) is bound by residues S40 and T62.

This sequence belongs to the TRAFAC class TrmE-Era-EngA-EngB-Septin-like GTPase superfamily. EngB GTPase family. It depends on Mg(2+) as a cofactor.

Its function is as follows. Necessary for normal cell division and for the maintenance of normal septation. This is Probable GTP-binding protein EngB from Shigella boydii serotype 4 (strain Sb227).